A 219-amino-acid chain; its full sequence is Sporamin A (219 aa).

A signal peptide spans 1 to 23 (MKALTLALFLALSLYLLPNPAHS).

The protein belongs to the protease inhibitor I3 (leguminous Kunitz-type inhibitor) family. As to expression, accumulates specifically in tuberous roots and tubers upon tuberization. Sporamin accounts 60 to 80% of the total soluble protein of the organ.

The protein resides in the vacuole. In terms of biological role, major tuberous root protein. In Ipomoea batatas (Sweet potato), this protein is Sporamin A (GSPO-A1).